We begin with the raw amino-acid sequence, 876 residues long: Alanine--tRNA ligase (876 aa).

4 residues coordinate Zn(2+): His565, His569, Cys667, and His671.

It belongs to the class-II aminoacyl-tRNA synthetase family. Zn(2+) serves as cofactor.

The protein localises to the cytoplasm. It carries out the reaction tRNA(Ala) + L-alanine + ATP = L-alanyl-tRNA(Ala) + AMP + diphosphate. Catalyzes the attachment of alanine to tRNA(Ala) in a two-step reaction: alanine is first activated by ATP to form Ala-AMP and then transferred to the acceptor end of tRNA(Ala). Also edits incorrectly charged Ser-tRNA(Ala) and Gly-tRNA(Ala) via its editing domain. The polypeptide is Alanine--tRNA ligase (Staphylococcus aureus (strain MSSA476)).